Reading from the N-terminus, the 426-residue chain is Enolase (426 aa).

Glutamine 163 contacts (2R)-2-phosphoglycerate. Residue glutamate 205 is the Proton donor of the active site. Residues aspartate 242, glutamate 286, and aspartate 313 each contribute to the Mg(2+) site. (2R)-2-phosphoglycerate contacts are provided by lysine 338, arginine 367, serine 368, and lysine 389. Lysine 338 (proton acceptor) is an active-site residue.

Belongs to the enolase family. The cofactor is Mg(2+).

It localises to the cytoplasm. The protein resides in the secreted. The protein localises to the cell surface. It carries out the reaction (2R)-2-phosphoglycerate = phosphoenolpyruvate + H2O. It functions in the pathway carbohydrate degradation; glycolysis; pyruvate from D-glyceraldehyde 3-phosphate: step 4/5. In terms of biological role, catalyzes the reversible conversion of 2-phosphoglycerate (2-PG) into phosphoenolpyruvate (PEP). It is essential for the degradation of carbohydrates via glycolysis. This Helicobacter acinonychis (strain Sheeba) protein is Enolase.